The primary structure comprises 326 residues: Ribonuclease Z (326 aa).

Zn(2+) contacts are provided by histidine 62, histidine 64, aspartate 66, histidine 67, histidine 140, aspartate 211, and histidine 269. The active-site Proton acceptor is aspartate 66.

The protein belongs to the RNase Z family. In terms of assembly, homodimer. Zn(2+) serves as cofactor.

It carries out the reaction Endonucleolytic cleavage of RNA, removing extra 3' nucleotides from tRNA precursor, generating 3' termini of tRNAs. A 3'-hydroxy group is left at the tRNA terminus and a 5'-phosphoryl group is left at the trailer molecule.. Zinc phosphodiesterase, which displays some tRNA 3'-processing endonuclease activity. Probably involved in tRNA maturation, by removing a 3'-trailer from precursor tRNA. The chain is Ribonuclease Z from Synechocystis sp. (strain ATCC 27184 / PCC 6803 / Kazusa).